A 389-amino-acid polypeptide reads, in one-letter code: MEQQEKKKRKVYRRRRLQSKPTSSFPLDLASEILLRLPVKSVVRFRCVSKLWSSIITDPYFIKTYETQSSTRQSLLFCFKQSDKLFVFSIPKHHYDSNSSSQAAIDRFQVKLPQEFSYPSPTESVHGLICFHVLATVIVWNPSMRQFLTLPKPRKSWKELTVFLGYDPIEGKHKVVCLPRNRTCDECQVLTLGSAQKSWRTVKTKHKHRSTNDTWGRCIKGVVYYIAYVYHTRVWCIMSFHVKSEKFDMIKLPLENIYRDVMINYEGRLACVDKLYTLNNDGIRLWILEDAEKHKWSSKQFLARYVHNDLRTNTISKLTGVTHAGEFVYISTQYLKSFVLFCDPKKNRFRKVEFNGIVDEEFRLSNGVGRGRIYALYNFPNHCESLMSL.

The F-box domain occupies 19–65 (SKPTSSFPLDLASEILLRLPVKSVVRFRCVSKLWSSIITDPYFIKTY).

The sequence is that of Putative F-box protein At1g47790 from Arabidopsis thaliana (Mouse-ear cress).